Reading from the N-terminus, the 150-residue chain is uncharacterized protein (150 aa).

A helical transmembrane segment spans residues 19-39; sequence SLGMCVILIDGLIVLTAAFVF.

This sequence to B.subtilis YpjC, YqfU and YitT.

It localises to the cell membrane. This is an uncharacterized protein from Bacillus sp. (strain PS3).